The chain runs to 315 residues: MSENYLHTTVLLDEAVKGLNLRPDSVYLDGTFGRGGHSRLILSKLGAQGRLFAIDRDPAAIEAARAIEDARFAIIHGPFSAMAEYMAQRDLLGKVDGILLDLGVSSPQLDDPERGFSFMRDGPLDMRMDTTRGQSAAQWLAQASAEDIAWVLKTFGEERFAKRIAQAIVAHNRQQPMTRTRELAALIADASPFRDKHKHPATRSFQAIRIYINSELEEIERALDGALTVLAPGGRLSVISFHSLEDRLVKQFIRQHSRGPQVPAGLPLTEAQIAAQYQDQRLLKAAGKMQPSAREISDNPRARSSVLRFAEKLAP.

Residues 35 to 37, D55, F79, D101, and Q108 contribute to the S-adenosyl-L-methionine site; that span reads GGH.

The protein belongs to the methyltransferase superfamily. RsmH family.

The protein resides in the cytoplasm. The enzyme catalyses cytidine(1402) in 16S rRNA + S-adenosyl-L-methionine = N(4)-methylcytidine(1402) in 16S rRNA + S-adenosyl-L-homocysteine + H(+). Functionally, specifically methylates the N4 position of cytidine in position 1402 (C1402) of 16S rRNA. The protein is Ribosomal RNA small subunit methyltransferase H of Sodalis glossinidius (strain morsitans).